Here is a 397-residue protein sequence, read N- to C-terminus: Mesoderm posterior protein 2 (397 aa).

Disordered stretches follow at residues 28–92 (WDST…REKL), 152–208 (QRGD…GRRP), 222–295 (SPSA…VPWT), and 351–376 (PNSEDQGPGAAFQLSEASPPQSSGLR). Composition is skewed to low complexity over residues 32–48 (SPASSSDSSGSCPCDGA) and 58–71 (SCSSRAAEAAATTP). The 55-residue stretch at 81–135 (GQRQSASEREKLRMRTLARALHELRRFLPPSLAPAGQSLTKIETLRLAIRYIGHL) folds into the bHLH domain. 13 tandem repeats follow at residues 179-180 (GQ), 181-182 (GQ), 183-184 (GQ), 185-186 (GQ), 187-188 (GQ), 189-190 (GQ), 191-192 (GQ), 193-194 (GQ), 195-196 (GQ), 197-198 (GQ), 199-200 (GQ), 201-202 (GQ), and 203-204 (GQ). Positions 179–204 (GQGQGQGQGQGQGQGQGQGQGQGQGQ) are 13 X 2 AA tandem repeats of G-Q. Residues 180–206 (QGQGQGQGQGQGQGQGQGQGQGQGQGR) show a composition bias toward gly residues. Residues 235 to 244 (RLGRGVHDTD) are compositionally biased toward basic and acidic residues. Composition is skewed to polar residues over residues 258-270 (PPYSSQGTTSDAS) and 365-375 (SEASPPQSSGL).

Post-translationally, degraded by the proteasome.

The protein resides in the nucleus. Functionally, transcription factor with important role in somitogenesis. Defines the rostrocaudal patterning of the somite by participating in distinct Notch pathways. Also regulates the FGF signaling pathway. Specifies the rostral half of the somites. Generates rostro-caudal polarity of somites by down-regulating in the presumptive rostral domain DLL1, a Notch ligand. Participates in the segment border formation by activating in the anterior presomitic mesoderm LFNG, a negative regulator of DLL1-Notch signaling. Acts as a strong suppressor of Notch activity. Together with MESP1 is involved in the epithelialization of somitic mesoderm and in the development of cardiac mesoderm. The chain is Mesoderm posterior protein 2 (MESP2) from Homo sapiens (Human).